The following is a 102-amino-acid chain: Salivary thrombin inhibitor anophelin (102 aa).

A signal peptide spans 1-21 (MATKLIVIAFLCAALIAVVQS). The segment at 25-102 (YAQGEEPTYD…SDSSSESTEH (78 aa)) is disordered. Residues 59 to 69 (SQLTEYANTAQ) are compositionally biased toward polar residues. Residues 70–73 (DPGR) are blocks active site cleft of host thrombin in a reverse direction compared to substrates. Over residues 80–90 (QANSNNGDQLP) the composition is skewed to polar residues. A compositionally biased stretch (low complexity) spans 91–102 (SQSDSSSESTEH).

The protein belongs to the anophelin family. Interacts with human F2 (thrombin); the interaction results in thrombin inhibition.

It localises to the secreted. Salivary protein with anticoagulant activity that inhibits host thrombin (F2). This is Salivary thrombin inhibitor anophelin from Anopheles funestus (African malaria mosquito).